We begin with the raw amino-acid sequence, 461 residues long: Cyclic AMP-responsive element-binding protein 3-like protein 3 (461 aa).

At 1–322 (MNTDLAAGKM…STSKSAQTGT (322 aa)) the chain is on the cytoplasmic side. The tract at residues 51-120 (DQQVLPNPDS…AGCHPAQPGK (70 aa)) is disordered. Residues 63–85 (FLSSILGSGDSLPSSPLWSPEGS) are compositionally biased toward low complexity. S173 carries the phosphoserine modification. Positions 243-306 (VLKKIRRKIR…LSLLEQLKKL (64 aa)) constitute a bZIP domain. The tract at residues 245 to 274 (KKIRRKIRNKQSAQESRKKKKEYIDGLETR) is basic motif. The tract at residues 285-306 (LQRKVLHLEKQNLSLLEQLKKL) is leucine-zipper. K294 is covalently cross-linked (Glycyl lysine isopeptide (Lys-Gly) (interchain with G-Cter in ubiquitin)). Residues 323-343 (CVAVLLLSFALIILPSISPFG) traverse the membrane as a helical; Signal-anchor for type II membrane protein segment. Residues 344 to 461 (PNKTESPGDF…AGLEAAGDEL (118 aa)) are Lumenal-facing. The segment at 370–408 (RVAADAVPGSEAPGPRPEADTTREESPGSPGADWGFQDT) is disordered. O-linked (GalNAc...) serine glycosylation occurs at S379. The segment covering 386–395 (PEADTTREES) has biased composition (basic and acidic residues). N-linked (GlcNAc...) asparagine glycosylation is found at N410, N413, N420, and N427. The tract at residues 442–461 (APGPSTGSGRAGLEAAGDEL) is disordered.

It belongs to the bZIP family. ATF subfamily. As to quaternary structure, binds DNA as a dimer. May form homodimers. Interacts with ATF6. Interacts with SYNV1/HRD1; this interaction leads to CREB3L3 ubiquitination and proteasomal degradation. In terms of processing, controlled by regulated intramembrane proteolysis (RIP). Following ER stress a fragment containing the cytoplasmic transcription factor domain is released by proteolysis. The cleavage seems to be performed sequentially by site-1 and site-2 proteases (PS1 and PS2). Post-translationally, N- and O-glycosylated. N-glycosylation is required for optimal proteolytic activation. O-glycosylated with core 1 or possibly core 8 glycans. Ubiquitinated at Lys-294 by SYNV1/HRD1 via 'Lys-27'-linked ubiquitin. In terms of tissue distribution, exclusively expressed in liver. Underexpressed in hepatocellular carcinoma tissues.

The protein resides in the endoplasmic reticulum membrane. The protein localises to the nucleus. Its function is as follows. Transcription factor that may act during endoplasmic reticulum stress by activating unfolded protein response target genes. Activated in response to cAMP stimulation. In vitro, binds to the cAMP response element (CRE) and box-B element. Activates transcription through box-B element. Activates transcription through CRE. May function synergistically with ATF6. In acute inflammatory response, may activate expression of acute phase response (APR) genes. May be involved in growth suppression. Regulates FGF21 transcription. Plays a crucial role in the regulation of triglyceride metabolism and is required for the maintenance of normal plasma triglyceride concentrations. This chain is Cyclic AMP-responsive element-binding protein 3-like protein 3 (CREB3L3), found in Homo sapiens (Human).